Consider the following 322-residue polypeptide: Follistatin-A (322 aa).

Positions 1–32 are cleaved as a signal peptide; that stretch reads MLRMLKRQQLHPGMILLLFWLCYLIEDQKVQA. Residues 33–106 enclose the TB domain; that stretch reads GNCWLQQGKN…TCDNVDCGPG (74 aa). 8 disulfides stabilise this stretch: C35-C58, C45-C91, C59-C94, C98-C109, C103-C119, C121-C153, C125-C146, and C135-C167. N75 carries an N-linked (GlcNAc...) asparagine glycan. In terms of domain architecture, Follistatin-like 1 spans 97 to 120; the sequence is TCDNVDCGPGKRCKMNRRSKPRCV. 3 Kazal-like domains span residues 103–169, 189–244, and 267–321; these read CGPG…KCKK, NAYC…KCIK, and RGRC…SCNC. A glycan (N-linked (GlcNAc...) asparagine) is linked at N127. The region spanning 170 to 193 is the Follistatin-like 2 domain; the sequence is TCRDVLCPGSSTCVVDQTNNAYCV. Intrachain disulfides connect C195–C228, C199–C221, and C210–C242. Residues 247–271 enclose the Follistatin-like 3 domain; that stretch reads SCDDIHCSAGKKCLWDAKMSRGRCA. Intrachain disulfides connect C273/C305, C277/C298, and C287/C319. N291 carries an N-linked (GlcNAc...) asparagine glycan.

Monomer. As to expression, not expressed in the organizer region. Expression in gastrulating embryos is confined to anterior and paraxial regions, which give rise to head mesoderm and the first five somites. In addition, expressed transiently in a subset of cells in the posterior notochord anlage. Later, expression is seen in brain, eyes and somites.

Its function is as follows. Binds directly to activin and functions as an activin antagonist. Specific inhibitor of the biosynthesis and secretion of pituitary follicle stimulating hormone (fsh). Inhibits bmp-signaling during later stages of development including late phases of dorsoventral patterning, to refine the early pattern set up by the interaction of chordino and bmp2/4. Not involved in organizer function or early phases of dorsoventral pattern formation. This Danio rerio (Zebrafish) protein is Follistatin-A (fsta).